The primary structure comprises 288 residues: ATP synthase gamma chain (288 aa).

This sequence belongs to the ATPase gamma chain family. F-type ATPases have 2 components, CF(1) - the catalytic core - and CF(0) - the membrane proton channel. CF(1) has five subunits: alpha(3), beta(3), gamma(1), delta(1), epsilon(1). CF(0) has three main subunits: a, b and c.

It localises to the cell inner membrane. Its function is as follows. Produces ATP from ADP in the presence of a proton gradient across the membrane. The gamma chain is believed to be important in regulating ATPase activity and the flow of protons through the CF(0) complex. This chain is ATP synthase gamma chain, found in Aliivibrio fischeri (strain ATCC 700601 / ES114) (Vibrio fischeri).